The primary structure comprises 726 residues: Procollagen-lysine,2-oxoglutarate 5-dioxygenase 1 (726 aa).

Positions 1–18 (MRLLLLLAPLGWLLLAET) are cleaved as a signal peptide. N-linked (GlcNAc...) asparagine glycosylation is found at asparagine 196 and asparagine 537. Residues 635–726 (QFDLAFVVRY…RYIAVSFVDP (92 aa)) form the Fe2OG dioxygenase domain. Fe cation contacts are provided by histidine 655 and aspartate 657. Residue asparagine 685 is glycosylated (N-linked (GlcNAc...) asparagine). Histidine 707 lines the Fe cation pocket. The active site involves arginine 717.

As to quaternary structure, homodimer. Identified in a complex with P3H3 and P3H4. Fe(2+) serves as cofactor. L-ascorbate is required as a cofactor.

The protein localises to the rough endoplasmic reticulum membrane. It carries out the reaction L-lysyl-[collagen] + 2-oxoglutarate + O2 = (5R)-5-hydroxy-L-lysyl-[collagen] + succinate + CO2. Functionally, part of a complex composed of PLOD1, P3H3 and P3H4 that catalyzes hydroxylation of lysine residues in collagen alpha chains and is required for normal assembly and cross-linkling of collagen fibrils. Forms hydroxylysine residues in -Xaa-Lys-Gly- sequences in collagens. These hydroxylysines serve as sites of attachment for carbohydrate units and are essential for the stability of the intermolecular collagen cross-links. This chain is Procollagen-lysine,2-oxoglutarate 5-dioxygenase 1 (PLOD1), found in Bos taurus (Bovine).